The primary structure comprises 387 residues: Probable protein phosphatase 2C 25 (387 aa).

The 300-residue stretch at 52–351 folds into the PPM-type phosphatase domain; sequence EFSFAVVQAN…DDITVVVVYI (300 aa). Positions 83, 84, 283, and 342 each coordinate Mn(2+).

It belongs to the PP2C family. Requires Mg(2+) as cofactor. It depends on Mn(2+) as a cofactor.

The enzyme catalyses O-phospho-L-seryl-[protein] + H2O = L-seryl-[protein] + phosphate. It carries out the reaction O-phospho-L-threonyl-[protein] + H2O = L-threonyl-[protein] + phosphate. The sequence is that of Probable protein phosphatase 2C 25 from Oryza sativa subsp. japonica (Rice).